The following is a 197-amino-acid chain: Recombination protein RecR (197 aa).

The C4-type zinc-finger motif lies at Cys57–Cys72. The Toprim domain occupies Gly79–Pro174.

This sequence belongs to the RecR family.

Its function is as follows. May play a role in DNA repair. It seems to be involved in an RecBC-independent recombinational process of DNA repair. It may act with RecF and RecO. The protein is Recombination protein RecR of Geobacter sp. (strain M21).